A 246-amino-acid polypeptide reads, in one-letter code: 2,5-diamino-6-ribosylamino-4(3H)-pyrimidinone 5'-phosphate reductase (246 aa).

Residues threonine 78, aspartate 82, leucine 163, and 186-190 (GAEVL) contribute to the NADP(+) site.

Belongs to the HTP reductase family. In terms of assembly, homodimer.

It carries out the reaction 2,5-diamino-6-(1-D-ribitylamino)pyrimidin-4(3H)-one 5'-phosphate + NADP(+) = 2,5-diamino-6-(1-D-ribosylamino)pyrimidin-4(3H)-one 5'-phosphate + NADPH + H(+). The catalysed reaction is 2,5-diamino-6-(1-D-ribitylamino)pyrimidin-4(3H)-one 5'-phosphate + NAD(+) = 2,5-diamino-6-(1-D-ribosylamino)pyrimidin-4(3H)-one 5'-phosphate + NADH + H(+). The protein operates within cofactor biosynthesis; riboflavin biosynthesis. Its function is as follows. Catalyzes an early step in riboflavin biosynthesis, the NADPH-dependent reduction of the ribose side chain of 2,5-diamino-6-ribosylamino-4(3H)-pyrimidinone 5'-phosphate, yielding 2,5-diamino-6-ribitylamino-4(3H)-pyrimidinone 5'-phosphate. This Eremothecium gossypii (strain ATCC 10895 / CBS 109.51 / FGSC 9923 / NRRL Y-1056) (Yeast) protein is 2,5-diamino-6-ribosylamino-4(3H)-pyrimidinone 5'-phosphate reductase (RIB7).